Here is a 148-residue protein sequence, read N- to C-terminus: Protein Smg homolog (148 aa).

Belongs to the Smg family.

The chain is Protein Smg homolog from Thiobacillus denitrificans (strain ATCC 25259 / T1).